A 204-amino-acid polypeptide reads, in one-letter code: Methylthioribulose-1-phosphate dehydratase (204 aa).

Residues His-94 and His-96 each contribute to the Zn(2+) site.

Belongs to the aldolase class II family. MtnB subfamily. Zn(2+) is required as a cofactor.

It catalyses the reaction 5-(methylsulfanyl)-D-ribulose 1-phosphate = 5-methylsulfanyl-2,3-dioxopentyl phosphate + H2O. It functions in the pathway amino-acid biosynthesis; L-methionine biosynthesis via salvage pathway; L-methionine from S-methyl-5-thio-alpha-D-ribose 1-phosphate: step 2/6. Catalyzes the dehydration of methylthioribulose-1-phosphate (MTRu-1-P) into 2,3-diketo-5-methylthiopentyl-1-phosphate (DK-MTP-1-P). This chain is Methylthioribulose-1-phosphate dehydratase, found in Cronobacter sakazakii (strain ATCC BAA-894) (Enterobacter sakazakii).